Reading from the N-terminus, the 514-residue chain is MAREDASVPRSHDSADASPNSTAKEIPVPQPPLLNLNLNLNMNSGFNLSNWWHQITSIEADSSDDRNNNNSNNGINAAESDSAQSQPIVVLGHSYQTTEEAHEDIIKKLCLTYRYGFERIPRAVNGPSPLSFMQSVIFSKSLLYNLQNFNNFIEKENFTTDVGWGCMIRTSQSLLANTFVRLLDKQSDIIALFNDTYLAPFSLHNFIRVASSSPLKVKPGEWFGPNAASLSIKRLCDGYYDNSTSETILPRINVLISESTDLYDSQIAQLLEPSTETKGLLVLLPVRLGIDSINSYYFSSLLHLLSLEQSVGIAGGKPSSSFYFFGYQDNSLIYMDPHSAQIFSSDIDMSTYYATRYQRVDIGKLDPSMLIGVFIRDLTSYENFKKSCLDAANKIVHFHATERSTVPESRRKNSEFVNINRSDLKDEDYINIDRVNRLDSTDDFIDLGDDYVETNTNLEEATPSAEDTVPVSTLSASESEITTSSYETPTSKDDNSSRASLDVVVLDTTGEQQE.

Residues 1-15 show a composition bias toward basic and acidic residues; the sequence is MAREDASVPRSHDSA. Disordered stretches follow at residues 1–28 and 61–84; these read MARE…EIPV and DSSD…DSAQ. The active-site Nucleophile is the Cys166. Residues Asp336 and His338 contribute to the active site. Residues 461 to 514 are disordered; sequence ATPSAEDTVPVSTLSASESEITTSSYETPTSKDDNSSRASLDVVVLDTTGEQQE. Residues 472–489 show a composition bias toward low complexity; the sequence is STLSASESEITTSSYETP.

It belongs to the peptidase C54 family.

The protein localises to the cytoplasm. It localises to the nucleus. The protein resides in the preautophagosomal structure. It catalyses the reaction [protein]-C-terminal L-amino acid-glycyl-phosphatidylethanolamide + H2O = [protein]-C-terminal L-amino acid-glycine + a 1,2-diacyl-sn-glycero-3-phosphoethanolamine. Cysteine protease that plays a key role in cytoplasm to vacuole transport (Cvt) and autophagy by mediating both proteolytic activation and delipidation of ATG8. Required for selective autophagic degradation of the nucleus (nucleophagy) as well as for mitophagy which contributes to regulate mitochondrial quantity and quality by eliminating the mitochondria to a basal level to fulfill cellular energy requirements and preventing excess ROS production. The protease activity is required for proteolytic activation of ATG8: cleaves the C-terminal amino acid of ATG8 to reveal a C-terminal glycine. ATG8 ubiquitin-like activity requires the exposure of the glycine at the C-terminus for its conjugation to phosphatidylethanolamine (PE) and its insertion to membranes, which is necessary for autophagy. The ATG8-PE conjugate mediates tethering between adjacent membranes and stimulates membrane hemifusion, leading to expansion of the autophagosomal membrane during autophagy. In addition to the protease activity, also catalyzes deconjugation of PE-conjugated forms of ATG8 during macroautophagy: ATG8 delipidation is required to release the protein from membranes, which facilitates multiple events during macroautophagy, and especially for efficient autophagosome biogenesis, the assembly of ATG9-containing tubulovesicular clusters into phagophores/autophagosomes, and for the disassembly of PAS-associated ATG components. ATG8 delipidation by ATG4 also recycles ATG8-PE generated on inappropriate membranes to maintain a reservoir of unlipidated ATG8 that is required for autophagosome formation at the PAS. The chain is Probable cysteine protease ATG4 (ATG4) from Scheffersomyces stipitis (strain ATCC 58785 / CBS 6054 / NBRC 10063 / NRRL Y-11545) (Yeast).